The primary structure comprises 178 residues: Cytochrome c-type biogenesis protein CcmE (178 aa).

The Cytoplasmic portion of the chain corresponds to 1–8 (MNPRRKKR). A helical; Signal-anchor for type II membrane protein transmembrane segment spans residues 9–29 (LAIVGSILIGIGVVSGLVLYA). Over 30 to 178 (LSQNIDLFFT…QLESKKTNSY (149 aa)) the chain is Periplasmic. H143 and Y147 together coordinate heme. A disordered region spans residues 154-178 (EAAGQKHDKATYSDKQLESKKTNSY). Positions 157–178 (GQKHDKATYSDKQLESKKTNSY) are enriched in basic and acidic residues.

The protein belongs to the CcmE/CycJ family.

It is found in the cell inner membrane. In terms of biological role, heme chaperone required for the biogenesis of c-type cytochromes. Transiently binds heme delivered by CcmC and transfers the heme to apo-cytochromes in a process facilitated by CcmF and CcmH. In Colwellia psychrerythraea (strain 34H / ATCC BAA-681) (Vibrio psychroerythus), this protein is Cytochrome c-type biogenesis protein CcmE.